Consider the following 681-residue polypeptide: Envelope glycoprotein (681 aa).

Residues 1–18 (MKTIYFLISLILIQSIKT) form the signal peptide. The Extracellular portion of the chain corresponds to 19-648 (LPVLEIASNS…GLGGKWWTSD (630 aa)). A receptor-binding region spans residues 38–188 (SGTLQKTEDV…FSRQGQGYRH (151 aa)). 7 N-linked (GlcNAc...) asparagine; by host glycosylation sites follow: N94, N171, N190, N202, N207, N219, and N223. The segment at 223–428 (NQTCPPSLKP…PDSSPTTRPP (206 aa)) is disordered. Polar residues-rich tracts occupy residues 236 to 260 (PTVT…MNPS) and 278 to 315 (PHTT…TNPS). The segment at 277 to 455 (GPHTTLNVVT…PFLDGLINTE (179 aa)) is mucin-like region. Residues N310, N323, N336, N350, N360, N364, N381, N397, N475, and N487 are each glycosylated (N-linked (GlcNAc...) asparagine; by host). Residues 327–347 (PTTQPATLLNNTNTTPTYNTL) show a composition bias toward low complexity. Polar residues-rich tracts occupy residues 348-365 (KYNL…TNND) and 373-394 (SEQT…TTGQ). Low complexity predominate over residues 395–428 (DTNSTTNIIMTTSDITSKHPTNSSPDSSPTTRPP). The interval 529-549 (GLSWIPFFGPGIEGLYTAGLI) is fusion peptide. N-linked (GlcNAc...) asparagine; by host glycans are attached at residues N564 and N619. A helical transmembrane segment spans residues 649–669 (WGVLTNLGILLLLSIAVLIAL). The Cytoplasmic portion of the chain corresponds to 670–681 (SCICRIFTKYIG). 2 S-palmitoyl cysteine; by host lipidation sites follow: C671 and C673.

Belongs to the filoviruses glycoprotein family. Homotrimer; each monomer consists of a GP1 and a GP2 subunit linked by disulfide bonds. The resulting peplomers (GP1,2) protrude from the virus surface as spikes. GP1,2 interacts with human CD209 and CLEC4M (collectively referred to as DC-SIGN(R)). Asialoglycoprotein receptor (ASGP-R) may be a liver-specific receptor for GP1,2. Members of the Tyro3 receptor tyrosine kinase family may be cell entry factors interacting with GP1,2. In terms of processing, N-glycosylated. Post-translationally, O-glycosylated in the mucin-like region. Specific enzymatic cleavages in vivo yield mature proteins. The precursor is processed into GP1 and GP2 by host cell furin in the trans Golgi, and maybe by other host proteases, to yield the mature GP1 and GP2 proteins. The cleavage site corresponds to the furin optimal cleavage sequence [KR]-X-[KR]-R. In terms of processing, GP1 is phosphorylated on serine residues between residues 260 and 273.

Its subcellular location is the virion membrane. It localises to the host cell membrane. Functionally, GP1 is responsible for binding to the receptor(s) on target cells. Interacts with CD209/DC-SIGN and CLEC4M/DC-SIGNR which act as cofactors for virus entry into the host cell. Binding to CD209 and CLEC4M, which are respectively found on dendritic cells (DCs), and on endothelial cells of liver sinusoids and lymph node sinuses, facilitate infection of macrophages and endothelial cells. These interactions not only facilitate virus cell entry, but also allow capture of viral particles by DCs and subsequent transmission to susceptible cells without DCs infection (trans infection). Its function is as follows. GP2 acts as a class I viral fusion protein. Under the current model, the protein has at least 3 conformational states: pre-fusion native state, pre-hairpin intermediate state, and post-fusion hairpin state. During viral and target cell membrane fusion, the coiled coil regions (heptad repeats) assume a trimer-of-hairpins structure, positioning the fusion peptide in close proximity to the C-terminal region of the ectodomain. The formation of this structure appears to drive apposition and subsequent fusion of viral and target cell membranes. Responsible for penetration of the virus into the cell cytoplasm by mediating the fusion of the membrane of the endocytosed virus particle with the endosomal membrane. Low pH in endosomes induces an irreversible conformational change in GP2, releasing the fusion hydrophobic peptide. The sequence is that of Envelope glycoprotein (GP) from Chlorocebus aethiops (Green monkey).